Reading from the N-terminus, the 364-residue chain is Growth hormone secretagogue receptor type 1 (364 aa).

The Extracellular portion of the chain corresponds to 1 to 40 (MWNATPSEEPEPNVTLDLDWDASPGNDSLSDELLPLFPAP). N-linked (GlcNAc...) asparagine glycans are attached at residues N13 and N26. The chain crosses the membrane as a helical span at residues 41-66 (LLAGVTATCVALFVVGISGNLLTMLV). The Cytoplasmic segment spans residues 67–72 (VSRFRE). The helical transmembrane segment at 73 to 96 (LRTTTNLYLSSMAFSDLLIFLCMP) threads the bilayer. Topologically, residues 97 to 117 (LDLVRLWQYRPWNFGDLLCKL) are extracellular. C115 and C197 are joined by a disulfide. Residues 118-139 (FQFVSESCTYATVLTITALSVE) traverse the membrane as a helical segment. Residues 140-162 (RYFAICFPLRAKVVVTKGRVKLV) lie on the Cytoplasmic side of the membrane. A helical transmembrane segment spans residues 163–183 (ILVIWAVAFCSAGPIFVLVGV). Residues 184–211 (EHENGTDPRDTNECRATEFAVRSGLLTV) are Extracellular-facing. N187 is a glycosylation site (N-linked (GlcNAc...) asparagine). The chain crosses the membrane as a helical span at residues 212 to 235 (MVWVSSVFFFLPVFCLTVLYSLIG). Residues 236–263 (RKLWRRRGDAAVGSSLRDQNHKQTVKML) lie on the Cytoplasmic side of the membrane. A helical membrane pass occupies residues 264–285 (AVVVFAFILCWLPFHVGRYLFS). The Extracellular portion of the chain corresponds to 286–302 (KSFEPGSLEIAQISQYC). The helical transmembrane segment at 303–326 (NLVSFVLFYLSAAINPILYNIMSK) threads the bilayer. Topologically, residues 327-364 (KYRVAVFKLLGFESFSQRKLSTLKDESSRAWTKSSINT) are cytoplasmic.

The protein belongs to the G-protein coupled receptor 1 family.

It is found in the cell membrane. In terms of biological role, receptor for ghrelin, coupled to G-alpha-11 proteins. Stimulates growth hormone secretion. Also binds other growth hormone releasing peptides (GHRP) (e.g. Met-enkephalin and GHRP-6) as well as non-peptide, low molecular weight secretagogues (e.g. L-692,429, MK-0677, adenosine). The protein is Growth hormone secretagogue receptor type 1 (Ghsr) of Mus musculus (Mouse).